Reading from the N-terminus, the 233-residue chain is 1-(5-phosphoribosyl)-5-[(5-phosphoribosylamino)methylideneamino] imidazole-4-carboxamide isomerase (233 aa).

Asp8 (proton acceptor) is an active-site residue. Asp125 functions as the Proton donor in the catalytic mechanism.

The protein belongs to the HisA/HisF family.

The protein resides in the cytoplasm. It carries out the reaction 1-(5-phospho-beta-D-ribosyl)-5-[(5-phospho-beta-D-ribosylamino)methylideneamino]imidazole-4-carboxamide = 5-[(5-phospho-1-deoxy-D-ribulos-1-ylimino)methylamino]-1-(5-phospho-beta-D-ribosyl)imidazole-4-carboxamide. It participates in amino-acid biosynthesis; L-histidine biosynthesis; L-histidine from 5-phospho-alpha-D-ribose 1-diphosphate: step 4/9. The protein is 1-(5-phosphoribosyl)-5-[(5-phosphoribosylamino)methylideneamino] imidazole-4-carboxamide isomerase of Thermococcus kodakarensis (strain ATCC BAA-918 / JCM 12380 / KOD1) (Pyrococcus kodakaraensis (strain KOD1)).